Reading from the N-terminus, the 468-residue chain is Adenylosuccinate synthetase (468 aa).

GTP is bound by residues glycine 23–lysine 29 and glycine 51–glutamate 53. Residue aspartate 24 is the Proton acceptor of the active site. Positions 24 and 51 each coordinate Mg(2+). IMP contacts are provided by residues aspartate 24–lysine 27, asparagine 49–histidine 52, threonine 142, arginine 156, asparagine 238, threonine 253, and arginine 317. Catalysis depends on histidine 52, which acts as the Proton donor. Valine 313 to arginine 319 provides a ligand contact to substrate. GTP contacts are provided by residues arginine 319 and lysine 345–aspartate 347.

Belongs to the adenylosuccinate synthetase family. In terms of assembly, homodimer. The cofactor is Mg(2+).

The protein localises to the cytoplasm. It carries out the reaction IMP + L-aspartate + GTP = N(6)-(1,2-dicarboxyethyl)-AMP + GDP + phosphate + 2 H(+). Its pathway is purine metabolism; AMP biosynthesis via de novo pathway; AMP from IMP: step 1/2. Functionally, plays an important role in the salvage pathway for purine nucleotide biosynthesis. Catalyzes the first committed step in the biosynthesis of AMP from IMP. This Theileria annulata protein is Adenylosuccinate synthetase.